A 252-amino-acid polypeptide reads, in one-letter code: Probable transcriptional regulatory protein Lxx10750 (252 aa).

Belongs to the TACO1 family.

It is found in the cytoplasm. The polypeptide is Probable transcriptional regulatory protein Lxx10750 (Leifsonia xyli subsp. xyli (strain CTCB07)).